The sequence spans 235 residues: Phosphoribosylaminoimidazole-succinocarboxamide synthase (235 aa).

It belongs to the SAICAR synthetase family.

It carries out the reaction 5-amino-1-(5-phospho-D-ribosyl)imidazole-4-carboxylate + L-aspartate + ATP = (2S)-2-[5-amino-1-(5-phospho-beta-D-ribosyl)imidazole-4-carboxamido]succinate + ADP + phosphate + 2 H(+). It participates in purine metabolism; IMP biosynthesis via de novo pathway; 5-amino-1-(5-phospho-D-ribosyl)imidazole-4-carboxamide from 5-amino-1-(5-phospho-D-ribosyl)imidazole-4-carboxylate: step 1/2. This Streptococcus mutans serotype c (strain ATCC 700610 / UA159) protein is Phosphoribosylaminoimidazole-succinocarboxamide synthase.